The primary structure comprises 420 residues: Protein STB1 (420 aa).

Ser-2 is subject to N-acetylserine. An interaction with SWI6 region spans residues 2-70 (SQPQMSPEKE…DEDHKTLLEA (69 aa)). Ser-7 is subject to Phosphoserine. Disordered stretches follow at residues 30–187 (QLKL…SDNT) and 273–319 (DSPS…ELNG). Over residues 43–55 (RKQDSTTKKRSGE) the composition is skewed to basic and acidic residues. Ser-72 is modified (phosphoserine). Phosphothreonine is present on Thr-99. Ser-102 is subject to Phosphoserine. Residues 106 to 122 (RKAEDRSQQIKPRKEDT) show a composition bias toward basic and acidic residues. The segment covering 156 to 169 (NNNNSSNHSNNNNN) has biased composition (low complexity). A compositionally biased stretch (polar residues) spans 277 to 319 (LYLSNNNGSVQATLSPQQRRKPTTNTLHPPSNVPTTPSRELNG). Thr-419 is modified (phosphothreonine).

As to quaternary structure, interacts with the ANK repeats of SWI6. The interaction with SWI6 is required for function. Interacts with SIN3. Phosphorylated by CDC28 in a cell cycle-dependent manner, inhibiting the interaction with SWI6.

It is found in the cytoplasm. The protein resides in the nucleus. In terms of biological role, involved in the regulation and timing of MBF-dependent transcription in late G1 of the cell cycle. The polypeptide is Protein STB1 (STB1) (Saccharomyces cerevisiae (strain ATCC 204508 / S288c) (Baker's yeast)).